Reading from the N-terminus, the 295-residue chain is Cyclin-G1 (295 aa).

Belongs to the cyclin family. Cyclin G subfamily.

The protein resides in the nucleus. May play a role in growth regulation. Is associated with G2/M phase arrest in response to DNA damage. May be an intermediate by which p53 mediates its role as an inhibitor of cellular proliferation. The chain is Cyclin-G1 (CCNG1) from Bos taurus (Bovine).